The chain runs to 95 residues: Large ribosomal subunit protein bL27 (95 aa).

The propeptide occupies 1–6; that stretch reads MFLQLF.

It belongs to the bacterial ribosomal protein bL27 family. The N-terminus is cleaved by ribosomal processing cysteine protease Prp.

The sequence is that of Large ribosomal subunit protein bL27 from Symbiobacterium thermophilum (strain DSM 24528 / JCM 14929 / IAM 14863 / T).